The primary structure comprises 273 residues: 2,3,4,5-tetrahydropyridine-2,6-dicarboxylate N-succinyltransferase (273 aa).

The substrate site is built by R104 and D141.

It belongs to the transferase hexapeptide repeat family. In terms of assembly, homotrimer.

The protein resides in the cytoplasm. It carries out the reaction (S)-2,3,4,5-tetrahydrodipicolinate + succinyl-CoA + H2O = (S)-2-succinylamino-6-oxoheptanedioate + CoA. It participates in amino-acid biosynthesis; L-lysine biosynthesis via DAP pathway; LL-2,6-diaminopimelate from (S)-tetrahydrodipicolinate (succinylase route): step 1/3. The sequence is that of 2,3,4,5-tetrahydropyridine-2,6-dicarboxylate N-succinyltransferase from Acinetobacter baylyi (strain ATCC 33305 / BD413 / ADP1).